The chain runs to 460 residues: Cysteine--tRNA ligase (460 aa).

Cysteine 28 is a Zn(2+) binding site. Residues 30-40 (VTIYDLCHIGH) carry the 'HIGH' region motif. Residues cysteine 209, histidine 234, and glutamate 238 each contribute to the Zn(2+) site. The short motif at 266 to 270 (KMSKS) is the 'KMSKS' region element. Lysine 269 is a binding site for ATP.

It belongs to the class-I aminoacyl-tRNA synthetase family. In terms of assembly, monomer. It depends on Zn(2+) as a cofactor.

It is found in the cytoplasm. It catalyses the reaction tRNA(Cys) + L-cysteine + ATP = L-cysteinyl-tRNA(Cys) + AMP + diphosphate. The chain is Cysteine--tRNA ligase from Vibrio vulnificus (strain CMCP6).